A 333-amino-acid chain; its full sequence is GTPase Obg (333 aa).

Residues 1-159 (MQFIDLAEIH…RHLRLELKLL (159 aa)) form the Obg domain. Residues 160 to 328 (AEVGIIGLPN…LLEAVWQELG (169 aa)) form the OBG-type G domain. GTP is bound by residues 166 to 173 (GLPNAGKS), 191 to 195 (FTTLV), 213 to 216 (DIPG), 280 to 283 (NKID), and 309 to 311 (SAV). Mg(2+) contacts are provided by S173 and T193.

This sequence belongs to the TRAFAC class OBG-HflX-like GTPase superfamily. OBG GTPase family. As to quaternary structure, monomer. Mg(2+) is required as a cofactor.

It localises to the cytoplasm. Its function is as follows. An essential GTPase which binds GTP, GDP and possibly (p)ppGpp with moderate affinity, with high nucleotide exchange rates and a fairly low GTP hydrolysis rate. Plays a role in control of the cell cycle, stress response, ribosome biogenesis and in those bacteria that undergo differentiation, in morphogenesis control. The polypeptide is GTPase Obg (Thermosynechococcus vestitus (strain NIES-2133 / IAM M-273 / BP-1)).